The chain runs to 402 residues: Olfactomedin-like protein 1 (402 aa).

A signal peptide spans 1–28; it reads MMVALPGASASLVLFLAAFLPPLQHAQD. N-linked (GlcNAc...) asparagine glycosylation is present at Asn66. The stretch at 73 to 135 forms a coiled coil; sequence RCQTHTNEYR…EAEEEKKIRT (63 aa). Residues Asn138 and Asn183 are each glycosylated (N-linked (GlcNAc...) asparagine). In terms of domain architecture, Olfactomedin-like spans 140-397; it reads SCDNMLMAIK…QIIYKLQTKK (258 aa). The cysteines at positions 141 and 324 are disulfide-linked.

Highly N-glycosylated.

It localises to the secreted. The protein is Olfactomedin-like protein 1 (Olfml1) of Rattus norvegicus (Rat).